The following is a 133-amino-acid chain: ATP synthase epsilon chain, chloroplastic (133 aa).

Belongs to the ATPase epsilon chain family. As to quaternary structure, F-type ATPases have 2 components, CF(1) - the catalytic core - and CF(0) - the membrane proton channel. CF(1) has five subunits: alpha(3), beta(3), gamma(1), delta(1), epsilon(1). CF(0) has three main subunits: a, b and c.

The protein localises to the plastid. It localises to the chloroplast thylakoid membrane. In terms of biological role, produces ATP from ADP in the presence of a proton gradient across the membrane. The protein is ATP synthase epsilon chain, chloroplastic of Chara vulgaris (Common stonewort).